The chain runs to 292 residues: MRWPPWSSESTNDEQKQTPSSWLSSAANKPSSILDWTAFTELRTIIPTVVLTSGILIAVRFHRRYLRRIPDAPSISSSYLRRRSIFGQVTSVGDGDNFRIFHTPGGRMAGWGWLPWKKVPTVKKDLKDKTIHIRLAGVDAPELAHFGRPEQPFARDAHTWLTSYLSNRRVRALVHRQDQYSRVVASVFVRRAFDFPPFRRRDVSYEMLKRGLATVYEAKIGSEFGGDKMEKKYRKAEWWAKKRARGLWKDYRRVGSGWESPREYKNRMGMGDPLPIEKGNGKGNGKGKIGQK.

Residues 1-27 are disordered; it reads MRWPPWSSESTNDEQKQTPSSWLSSAA. Residues 17 to 27 show a composition bias toward polar residues; it reads QTPSSWLSSAA. Residues 45–61 traverse the membrane as a helical segment; the sequence is IIPTVVLTSGILIAVRF. One can recognise a TNase-like domain in the interval 83-250; that stretch reads RSIFGQVTSV…KKRARGLWKD (168 aa). Arg134 is a catalytic residue. Asp139 contacts Ca(2+). Active-site residues include Glu142 and Arg182. The segment at 257–292 is disordered; the sequence is GWESPREYKNRMGMGDPLPIEKGNGKGNGKGKIGQK. Residues 281-292 show a composition bias toward gly residues; that stretch reads GKGNGKGKIGQK.

This sequence belongs to the LCL3 family.

Its subcellular location is the mitochondrion. It localises to the membrane. The chain is Probable endonuclease lcl3 (lcl3) from Penicillium rubens (strain ATCC 28089 / DSM 1075 / NRRL 1951 / Wisconsin 54-1255) (Penicillium chrysogenum).